We begin with the raw amino-acid sequence, 906 residues long: E3 ubiquitin-protein ligase CBL (906 aa).

The interval 1–21 (MAGNVKKSSGAGGGSGSGGSG) is disordered. Residues 1–357 (MAGNVKKSSG…DLTGLCEPTP (357 aa)) are sufficient for interaction with EPHB1. Residues 10–21 (GAGGGSGSGGSG) show a composition bias toward gly residues. The interval 47–175 (PPGTVDKKMV…KGIFPSGLFQ (129 aa)) is 4H. One can recognise a Cbl-PTB domain in the interval 47–351 (PPGTVDKKMV…GRNQNPDLTG (305 aa)). An EF-hand-like region spans residues 176 to 248 (GDTFRITKAD…FEFDIFTRLF (73 aa)). Residues aspartate 229, threonine 231, asparagine 233, tyrosine 235, and glutamate 240 each contribute to the Ca(2+) site. Residues 249 to 351 (QPWSSLLRNW…GRNQNPDLTG (103 aa)) are SH2-like. Arginine 294 is a 4-O-phospho-L-tyrosine binding site. The segment at 352–380 (LCEPTPQDHIKVTQEQYELYCEMGSTFQL) is linker. The required for ubiquitination of SPRED2 stretch occupies residues 358-906 (QDHIKVTQEQ…SISSPAHVAT (549 aa)). Phosphotyrosine; by INSR is present on tyrosine 371. Residues 381 to 420 (CKICAENDKDVKIEPCGHLMCTSCLTSWQESEGQGCPFCR) form an RING-type zinc finger. Disordered regions lie at residues 432–462 (DPFDPRGSGSLLRQGAEGAPSPNYDDDDDER), 477–498 (KVERPPSPFSMAPQASLPPVPP), and 519–667 (ASKA…IKPS). Serine 439, serine 452, and serine 483 each carry phosphoserine. Residues 533–550 (LPVPPTLRDLPPPPPPDR) are compositionally biased toward pro residues. Phosphoserine occurs at positions 619, 642, 668, and 669. Over residues 639–653 (STFSLDTSMSMNSSP) the composition is skewed to polar residues. The interaction with CD2AP stretch occupies residues 648–906 (SMNSSPLVGP…SISSPAHVAT (259 aa)). At tyrosine 674 the chain carries Phosphotyrosine. The interval 680-719 (PLPVPKLPPGEQCEGEEDTEYMTPSSRPLRPLDTSQSSRA) is disordered. Tyrosine 700 is subject to Phosphotyrosine; by ABL1. The residue at position 731 (tyrosine 731) is a Phosphotyrosine; by SRC. Disordered stretches follow at residues 743 to 781 (SITESSTFGEGNLAAAHANTGPEESENEDDGYDVPKPPV) and 799 to 854 (SFGW…ATAS). A compositionally biased stretch (acidic residues) spans 765-774 (EESENEDDGY). Residue tyrosine 774 is modified to Phosphotyrosine. A compositionally biased stretch (low complexity) spans 838 to 854 (GSCQQGSGPAASAATAS). The UBA domain maps to 856-895 (QLSSEIENLMSQGYSYQDIQKALVIAQNNIEMAKNILREF). Phosphoserine is present on serine 900.

Forms homodimers; IFT20 promotes the formation of stable homodimers. Interacts (phosphorylated at Tyr-731) with PIK3R1. Associates with NCK via its SH3 domain. The phosphorylated C-terminus interacts with CD2AP via its second SH3 domain. Binds to UBE2L3. Interacts with adapters SLA, SLA2 and with the phosphorylated C-terminus of SH2B2. Interacts with EGFR, SYK and ZAP70 via the highly conserved Cbl-N region. Also interacts with SORBS1 and INPPL1/SHIP2. Interacts with phosphorylated LAT2. Interacts with CBLB. Interacts with ALK, AXL, BLK, FGR and FGFR2. Interacts with CSF1R, EPHB1, FLT1, KDR, PDGFRA and PDGFRB; regulates receptor degradation through ubiquitination. Interacts with HCK and LYN. Interacts with ATX2. Interacts with TEK/TIE2 (tyrosine phosphorylated). Interacts with SH3KBP1 and this interaction is inhibited in the presence of SHKBP1 or ARAP1. Interacts with SIGLEC10. Interacts with IFT20. Interacts with SPRY2; the interaction inhibits CBL-mediated ubiquitination of EGFR. Interacts (phosphorylated at Tyr-774) with tensin TNS4 (via SH2 domain); the interaction is enhanced in the presence of EGF and reduces interaction of CBL with EGFR. Interacts with EGFR; the interaction is reduced in the presence of TNS4. Interacts with CD5. Interacts with CD93. As to quaternary structure, (Microbial infection) Interacts with M.tuberculosis LpqN, which influences the balance between intrinsic antibacterial and antiviral defense. Post-translationally, phosphorylated on tyrosine residues by ALK, EGFR, SYK, FYN and ZAP70. Phosphorylated on tyrosine residues in response to FLT1 and KIT signaling. Phosphorylated on tyrosine residues by INSR and FGR. Phosphorylated on several tyrosine residues by constitutively activated FGFR3. Not phosphorylated at Tyr-731 by FGFR3. Phosphorylated on tyrosine residues by activated CSF1R, PDGFRA and PDGFRB. Phosphorylated on tyrosine residues by HCK. Ubiquitinated, leading to its degradation via the proteasome. Ubiquitination is negatively regulated by IFT20.

It localises to the cytoplasm. It is found in the cell membrane. The protein resides in the cell projection. The protein localises to the cilium. Its subcellular location is the golgi apparatus. It carries out the reaction S-ubiquitinyl-[E2 ubiquitin-conjugating enzyme]-L-cysteine + [acceptor protein]-L-lysine = [E2 ubiquitin-conjugating enzyme]-L-cysteine + N(6)-ubiquitinyl-[acceptor protein]-L-lysine.. Its pathway is protein modification; protein ubiquitination. Functionally, E3 ubiquitin-protein ligase that acts as a negative regulator of many signaling pathways by mediating ubiquitination of cell surface receptors. Accepts ubiquitin from specific E2 ubiquitin-conjugating enzymes, and then transfers it to substrates promoting their degradation by the proteasome. Recognizes activated receptor tyrosine kinases, including KIT, FLT1, FGFR1, FGFR2, PDGFRA, PDGFRB, CSF1R, EPHA8 and KDR and mediates their ubiquitination to terminate signaling. Recognizes membrane-bound HCK, SRC and other kinases of the SRC family and mediates their ubiquitination and degradation. Ubiquitinates EGFR and SPRY2. Ubiquitinates NECTIN1 following association between NECTIN1 and herpes simplex virus 1/HHV-1 envelope glycoprotein D, leading to NECTIN1 removal from cell surface. Participates in signal transduction in hematopoietic cells. Plays an important role in the regulation of osteoblast differentiation and apoptosis. Essential for osteoclastic bone resorption. The 'Tyr-731' phosphorylated form induces the activation and recruitment of phosphatidylinositol 3-kinase to the cell membrane in a signaling pathway that is critical for osteoclast function. May be functionally coupled with the E2 ubiquitin-protein ligase UB2D3. In association with CBLB, required for proper feedback inhibition of ciliary platelet-derived growth factor receptor-alpha (PDGFRA) signaling pathway via ubiquitination and internalization of PDGFRA. This Homo sapiens (Human) protein is E3 ubiquitin-protein ligase CBL (CBL).